A 729-amino-acid chain; its full sequence is Cellulose synthase-like protein E1 (729 aa).

Transmembrane regions (helical) follow at residues 29–49 (VIAY…IWFY) and 64–84 (LIWF…VVTQ). Residues D152 and D443 contribute to the active site. The next 5 membrane-spanning stretches (helical) occupy residues 526–546 (LPVL…IPLF), 553–573 (WFIP…AEFL), 644–664 (MFLV…AAVA), 680–700 (QFVI…GMLL), and 709–729 (MSVT…LAFL).

Belongs to the glycosyltransferase 2 family. Plant cellulose synthase-like E subfamily.

It localises to the golgi apparatus membrane. Functionally, thought to be a Golgi-localized beta-glycan synthase that polymerize the backbones of noncellulosic polysaccharides (hemicelluloses) of plant cell wall. This Arabidopsis thaliana (Mouse-ear cress) protein is Cellulose synthase-like protein E1 (CSLE1).